Here is a 330-residue protein sequence, read N- to C-terminus: Beta-ketoacyl-[acyl-carrier-protein] synthase III (330 aa).

Active-site residues include cysteine 115 and histidine 255. Residues 256 to 260 are ACP-binding; that stretch reads QANFR. Asparagine 285 is an active-site residue.

Belongs to the thiolase-like superfamily. FabH family. Homodimer.

The protein resides in the cytoplasm. The enzyme catalyses malonyl-[ACP] + acetyl-CoA + H(+) = 3-oxobutanoyl-[ACP] + CO2 + CoA. The protein operates within lipid metabolism; fatty acid biosynthesis. Functionally, catalyzes the condensation reaction of fatty acid synthesis by the addition to an acyl acceptor of two carbons from malonyl-ACP. Catalyzes the first condensation reaction which initiates fatty acid synthesis and may therefore play a role in governing the total rate of fatty acid production. Possesses both acetoacetyl-ACP synthase and acetyl transacylase activities. Its substrate specificity determines the biosynthesis of branched-chain and/or straight-chain of fatty acids. This is Beta-ketoacyl-[acyl-carrier-protein] synthase III from Helicobacter pylori (strain P12).